Reading from the N-terminus, the 226-residue chain is ATP synthase F(0) complex subunit a (226 aa).

Helical transmembrane passes span 6-26 (FASFIAPTMMGLPIVTLIIMF), 68-88 (WSLMLMSLIMFIGSTNILGLL), 97-117 (QLSMNLGMAIPLWSATVFTGF), 136-156 (LLIPMLVIIETISLFIQPVAL), 164-184 (ITAGHLLIHLIGGATLALLNI), and 189-209 (AFITFTILILLTILEFAVALI).

Belongs to the ATPase A chain family. As to quaternary structure, component of the ATP synthase complex composed at least of ATP5F1A/subunit alpha, ATP5F1B/subunit beta, ATP5MC1/subunit c (homooctomer), MT-ATP6/subunit a, MT-ATP8/subunit 8, ATP5ME/subunit e, ATP5MF/subunit f, ATP5MG/subunit g, ATP5MK/subunit k, ATP5MJ/subunit j, ATP5F1C/subunit gamma, ATP5F1D/subunit delta, ATP5F1E/subunit epsilon, ATP5PF/subunit F6, ATP5PB/subunit b, ATP5PD/subunit d, ATP5PO/subunit OSCP. ATP synthase complex consists of a soluble F(1) head domain (subunits alpha(3) and beta(3)) - the catalytic core - and a membrane F(0) domain - the membrane proton channel (subunits c, a, 8, e, f, g, k and j). These two domains are linked by a central stalk (subunits gamma, delta, and epsilon) rotating inside the F1 region and a stationary peripheral stalk (subunits F6, b, d, and OSCP). Interacts with DNAJC30; interaction is direct.

It is found in the mitochondrion inner membrane. The catalysed reaction is H(+)(in) = H(+)(out). Subunit a, of the mitochondrial membrane ATP synthase complex (F(1)F(0) ATP synthase or Complex V) that produces ATP from ADP in the presence of a proton gradient across the membrane which is generated by electron transport complexes of the respiratory chain. ATP synthase complex consist of a soluble F(1) head domain - the catalytic core - and a membrane F(1) domain - the membrane proton channel. These two domains are linked by a central stalk rotating inside the F(1) region and a stationary peripheral stalk. During catalysis, ATP synthesis in the catalytic domain of F(1) is coupled via a rotary mechanism of the central stalk subunits to proton translocation. With the subunit c (ATP5MC1), forms the proton-conducting channel in the F(0) domain, that contains two crucial half-channels (inlet and outlet) that facilitate proton movement from the mitochondrial intermembrane space (IMS) into the matrix. Protons are taken up via the inlet half-channel and released through the outlet half-channel, following a Grotthuss mechanism. The sequence is that of ATP synthase F(0) complex subunit a from Sus scrofa (Pig).